A 1701-amino-acid polypeptide reads, in one-letter code: Merozoite surface protein 1 (1701 aa).

The N-terminal stretch at Met-1–Cys-19 is a signal peptide. The segment covering Gly-89–Gly-100 has biased composition (gly residues). Positions Gly-89–Thr-118 are disordered. The segment covering Asn-101–Thr-116 has biased composition (low complexity). N-linked (GlcNAc...) asparagine glycosylation is found at Asn-110 and Asn-239. Positions Asp-322–Glu-344 are disordered. Residues Asn-470, Asn-536, and Asn-607 are each glycosylated (N-linked (GlcNAc...) asparagine). Residues Ser-704–Thr-739 are disordered. Positions Glu-724–Glu-733 are enriched in acidic residues. N-linked (GlcNAc...) asparagine glycosylation is found at Asn-802, Asn-899, Asn-919, Asn-965, Asn-991, Asn-1089, and Asn-1196. The segment covering Thr-889 to Asn-927 has biased composition (low complexity). The segment at Thr-889–Ala-936 is disordered. 2 disordered regions span residues Pro-1231–Pro-1259 and Lys-1451–Lys-1472. Polar residues predominate over residues Val-1245–Pro-1259. Positions Ser-1456–Pro-1465 are enriched in pro residues. A glycan (N-linked (GlcNAc...) asparagine) is linked at Asn-1588. EGF-like domains follow at residues His-1592 to Pro-1632 and Asn-1633 to Ser-1680. Disulfide bonds link Cys-1594–Cys-1605, Cys-1599–Cys-1615, Cys-1617–Cys-1628, Cys-1636–Cys-1649, Cys-1643–Cys-1663, and Cys-1665–Cys-1679. Ser-1680 carries the GPI-anchor amidated serine lipid modification. A propeptide spans Ser-1681–Ile-1701 (removed in mature form).

Forms a complex composed of subunits p83, p30, p38, and p42 which remain non-covalently associated; the complex is formed at the merozoite surface prior to egress from host erythrocytes. Forms a complex composed of processed MSP1 subunits, MSP6 subunit p36 and MSP7; the complex is formed at the merozoite surface prior to egress from host erythrocytes. Within the complex, interacts (via subunit p38) with MSP6 subunit p36 and (via subunits p83, p30 and p38) with MSP7 (via subunit p22). Forms a complex composed of MSP1, MSP6, DBLMSP1 and DBLMSP2. Within the complex, interacts (via subunit p38) with DBLMSP1 and DBLMSP2. Forms a complex composed of MSP1, and rhoptry proteins RhopH3, RAP1 and CLAG9/RhopH3. Within the complex, interacts (via subunits p42 and p19) with RhopH3 (via C-terminus). Forms a complex composed of MSP1, MSP6, MSP7, MSP9 and MSP3; within the complex, MSP6 and MSP9 mediate the binding to the host erythrocyte. Interacts (via subunits p19 and p42) with MSP9; the interaction is direct; MSP1 subunits p19 or p42, and MSP9 form a co-ligand complex that interacts with host SLC4A1/Band 3 protein. May interact with PFD6. Interacts with host spectrin. As to quaternary structure, interacts with host glycophorin GYPA in a sialic acid-independent manner. In terms of assembly, interacts with host proinflammatory cytokine S100P; the interaction blocks S100P inflammatory and chemotactic activities. Interacts with host SLC4A1/Band 3 (via 5ABC region) on the host erythrocyte surface in a sialic acid-independent manner. The p190 precursor is cleaved by SUB1 prior to merozoite egress into 4 subunits p83, p30, p38, and p42 which remain non-covalently associated. SUB1-mediated proteolytic cleavage occurs in an orderly manner; the first cleavage occurs at the p30/p38 site, followed by cleavage at the p83/p30 site, in the 3D7 strain a second cleavage occurs at the N-terminus of p83, the last cleavage occurs at the p38/p42 site. The order of cleavage is essential for parasite viability. SUB1-mediated processing is essential for merozoite egress. In a second processing step during erythrocyte invasion, p42 is cleaved by SUB2 into p33 and p19; the latter remains attached to the merozoite surface via its GPI-anchor and is endocytosed during the subsequent ring stage.

It is found in the cell membrane. The protein resides in the secreted. Its subcellular location is the vacuole membrane. In terms of biological role, during the asexual blood stage, involved in merozoite egress from host erythrocytes possibly via its interaction with the host cytoskeleton protein spectrin resulting in the destabilization of the host cytoskeleton and thus leading to erythrocyte cell membrane rupture. Involved in the binding to host erythrocytes and is required for host erythrocyte invasion. By binding to host proinflammatory cytokine S100P may interfere with host immune responses. Its function is as follows. Involved in merozoite invasion of host erythrocytes. May play a role in the biogenesis and/or function of the food vacuole during the intraerythrocytic development. This chain is Merozoite surface protein 1, found in Plasmodium falciparum (isolate FC27 / Papua New Guinea).